The sequence spans 367 residues: Holliday junction branch migration complex subunit RuvB (367 aa).

The segment at 2–196 (TDEPLTDRPP…FGFTARLDFY (195 aa)) is large ATPase domain (RuvB-L). Residues Leu-35, Arg-36, Gly-77, Lys-80, Thr-81, Thr-82, 143 to 145 (EDF), Arg-186, Tyr-196, and Arg-233 each bind ATP. A Mg(2+)-binding site is contributed by Thr-81. Residues 197-267 (EPADLERIVH…VAQAALAVYE (71 aa)) form a small ATPAse domain (RuvB-S) region. Positions 270-367 (EHGLDRLDRA…IDRDAGEPTA (98 aa)) are head domain (RuvB-H). Arg-325 and Arg-330 together coordinate DNA.

It belongs to the RuvB family. In terms of assembly, homohexamer. Forms an RuvA(8)-RuvB(12)-Holliday junction (HJ) complex. HJ DNA is sandwiched between 2 RuvA tetramers; dsDNA enters through RuvA and exits via RuvB. An RuvB hexamer assembles on each DNA strand where it exits the tetramer. Each RuvB hexamer is contacted by two RuvA subunits (via domain III) on 2 adjacent RuvB subunits; this complex drives branch migration. In the full resolvosome a probable DNA-RuvA(4)-RuvB(12)-RuvC(2) complex forms which resolves the HJ.

The protein localises to the cytoplasm. The catalysed reaction is ATP + H2O = ADP + phosphate + H(+). Functionally, the RuvA-RuvB-RuvC complex processes Holliday junction (HJ) DNA during genetic recombination and DNA repair, while the RuvA-RuvB complex plays an important role in the rescue of blocked DNA replication forks via replication fork reversal (RFR). RuvA specifically binds to HJ cruciform DNA, conferring on it an open structure. The RuvB hexamer acts as an ATP-dependent pump, pulling dsDNA into and through the RuvAB complex. RuvB forms 2 homohexamers on either side of HJ DNA bound by 1 or 2 RuvA tetramers; 4 subunits per hexamer contact DNA at a time. Coordinated motions by a converter formed by DNA-disengaged RuvB subunits stimulates ATP hydrolysis and nucleotide exchange. Immobilization of the converter enables RuvB to convert the ATP-contained energy into a lever motion, pulling 2 nucleotides of DNA out of the RuvA tetramer per ATP hydrolyzed, thus driving DNA branch migration. The RuvB motors rotate together with the DNA substrate, which together with the progressing nucleotide cycle form the mechanistic basis for DNA recombination by continuous HJ branch migration. Branch migration allows RuvC to scan DNA until it finds its consensus sequence, where it cleaves and resolves cruciform DNA. The protein is Holliday junction branch migration complex subunit RuvB of Acidothermus cellulolyticus (strain ATCC 43068 / DSM 8971 / 11B).